The following is a 431-amino-acid chain: Serine--tRNA ligase (431 aa).

L-serine is bound at residue 235 to 237; that stretch reads TAE. ATP-binding positions include 266–268 and valine 282; that span reads RRE. Glutamate 289 lines the L-serine pocket. 353–356 provides a ligand contact to ATP; the sequence is EASS. An L-serine-binding site is contributed by serine 389.

The protein belongs to the class-II aminoacyl-tRNA synthetase family. Type-1 seryl-tRNA synthetase subfamily. As to quaternary structure, homodimer. The tRNA molecule binds across the dimer.

It is found in the cytoplasm. The catalysed reaction is tRNA(Ser) + L-serine + ATP = L-seryl-tRNA(Ser) + AMP + diphosphate + H(+). It catalyses the reaction tRNA(Sec) + L-serine + ATP = L-seryl-tRNA(Sec) + AMP + diphosphate + H(+). The protein operates within aminoacyl-tRNA biosynthesis; selenocysteinyl-tRNA(Sec) biosynthesis; L-seryl-tRNA(Sec) from L-serine and tRNA(Sec): step 1/1. Its function is as follows. Catalyzes the attachment of serine to tRNA(Ser). Is also able to aminoacylate tRNA(Sec) with serine, to form the misacylated tRNA L-seryl-tRNA(Sec), which will be further converted into selenocysteinyl-tRNA(Sec). In Chlorobium phaeobacteroides (strain DSM 266 / SMG 266 / 2430), this protein is Serine--tRNA ligase.